An 839-amino-acid polypeptide reads, in one-letter code: Phosphatidylinositol-glycan-specific phospholipase D (839 aa).

The N-terminal stretch at 1–23 (MSAFRFWSGLLMLLGFLCPRSSP) is a signal peptide. 5 N-linked (GlcNAc...) asparagine glycosylation sites follow: Asn-94, Asn-271, Asn-292, Asn-307, and Asn-321. 7 FG-GAP repeats span residues 365 to 427 (SSPA…GLPR), 434 to 496 (KEAH…GQLS), 498 to 558 (SPNV…YSSR), 562 to 622 (NVEA…SPGR), 632 to 692 (QSWF…GSTR), 703 to 769 (SLLS…TVGD), and 787 to 839 (QYVL…LGQD). N-linked (GlcNAc...) asparagine glycosylation is found at Asn-500, Asn-590, and Asn-658.

Belongs to the GPLD1 family. In terms of assembly, monomer. Post-translationally, glycosylated.

It is found in the secreted. The catalysed reaction is a 6-(alpha-D-glucosaminyl)-1-(1,2-diacyl-sn-glycero-3-phospho)-1D-myo-inositol + H2O = 6-(alpha-D-glucosaminyl)-1D-myo-inositol + a 1,2-diacyl-sn-glycero-3-phosphate + H(+). This protein hydrolyzes the inositol phosphate linkage in proteins anchored by phosphatidylinositol glycans (GPI-anchor) thus releasing these proteins from the membrane. The polypeptide is Phosphatidylinositol-glycan-specific phospholipase D (GPLD1) (Bos taurus (Bovine)).